A 430-amino-acid polypeptide reads, in one-letter code: Septin-14 (430 aa).

The 266-residue stretch at 48–313 (KGFSFNILCV…ECYRSNRLQK (266 aa)) folds into the Septin-type G domain. The segment at 58 to 65 (GETGIGKT) is G1 motif. Residues 58–65 (GETGIGKT), G113, 194–202 (KADSLSKND), G246, and R261 contribute to the GTP site. A G3 motif region spans residues 110–113 (KTVG). The interval 193–196 (AKAD) is G4 motif. A coiled-coil region spans residues 329-410 (QEMYEAKRRE…IIDFYKMKAA (82 aa)). The required for interaction with SEPTIN4. Required for migration of cortical neurons during corticogenesis stretch occupies residues 367–430 (DAEKELQDKF…NIKKDKDRKK (64 aa)).

This sequence belongs to the TRAFAC class TrmE-Era-EngA-EngB-Septin-like GTPase superfamily. Septin GTPase family. In terms of assembly, septins polymerize into heterooligomeric protein complexes that form filaments, and can associate with cellular membranes, actin filaments and microtubules. GTPase activity is required for filament formation. Interacts with ACTN4. Interacts with SEPTIN9. Interacts (via C-terminus) with SEPTIN4. Expressed in the testis and brain including the cerebrum, hippocampus and cerebellum (at protein level).

It localises to the cytoplasm. It is found in the cytoskeleton. Its subcellular location is the cell projection. The protein localises to the axon. The protein resides in the dendrite. It localises to the perikaryon. It is found in the perinuclear region. Its subcellular location is the cytoplasmic vesicle. The protein localises to the secretory vesicle. The protein resides in the acrosome. Filament-forming cytoskeletal GTPase. Involved in the migration of cortical neurons and the formation of neuron leading processes during embryonic development. Plays a role in sperm head formation during spermiogenesis, potentially via facilitating localization of ACTN4 to cell filaments. The protein is Septin-14 of Mus musculus (Mouse).